The primary structure comprises 172 residues: Protein GrpE (172 aa).

Positions Met1–Leu23 are disordered.

This sequence belongs to the GrpE family. As to quaternary structure, homodimer.

It localises to the cytoplasm. Participates actively in the response to hyperosmotic and heat shock by preventing the aggregation of stress-denatured proteins, in association with DnaK and GrpE. It is the nucleotide exchange factor for DnaK and may function as a thermosensor. Unfolded proteins bind initially to DnaJ; upon interaction with the DnaJ-bound protein, DnaK hydrolyzes its bound ATP, resulting in the formation of a stable complex. GrpE releases ADP from DnaK; ATP binding to DnaK triggers the release of the substrate protein, thus completing the reaction cycle. Several rounds of ATP-dependent interactions between DnaJ, DnaK and GrpE are required for fully efficient folding. This Xylella fastidiosa (strain M23) protein is Protein GrpE.